We begin with the raw amino-acid sequence, 218 residues long: Adenylate kinase (218 aa).

Position 10-15 (10-15 (GAGKGT)) interacts with ATP. Residues 30-59 (STGDMLRAAIAKGTPLGLSAQKIMESGGLV) are NMP. Residues threonine 31, arginine 36, 57 to 59 (GLV), 85 to 88 (GFPR), and glutamine 92 contribute to the AMP site. The tract at residues 122 to 159 (GRRIHQPSGRVYHVVNQPPKNPGVDDITGEPLIQRDDD) is LID. Residues arginine 123 and 132–133 (VY) contribute to the ATP site. AMP contacts are provided by arginine 156 and arginine 167. Glycine 203 contributes to the ATP binding site.

The protein belongs to the adenylate kinase family. In terms of assembly, monomer.

The protein resides in the cytoplasm. The enzyme catalyses AMP + ATP = 2 ADP. It functions in the pathway purine metabolism; AMP biosynthesis via salvage pathway; AMP from ADP: step 1/1. Functionally, catalyzes the reversible transfer of the terminal phosphate group between ATP and AMP. Plays an important role in cellular energy homeostasis and in adenine nucleotide metabolism. The chain is Adenylate kinase from Legionella pneumophila (strain Corby).